A 442-amino-acid polypeptide reads, in one-letter code: 3-ketoacyl-CoA thiolase (442 aa).

Cys105 (acyl-thioester intermediate) is an active-site residue. Catalysis depends on proton acceptor residues His398 and Cys428.

The protein belongs to the thiolase-like superfamily. Thiolase family. Heterotetramer of two alpha chains (FadJ) and two beta chains (FadI).

Its subcellular location is the cytoplasm. The enzyme catalyses an acyl-CoA + acetyl-CoA = a 3-oxoacyl-CoA + CoA. It functions in the pathway lipid metabolism; fatty acid beta-oxidation. Its function is as follows. Catalyzes the final step of fatty acid oxidation in which acetyl-CoA is released and the CoA ester of a fatty acid two carbons shorter is formed. This Aliivibrio fischeri (strain ATCC 700601 / ES114) (Vibrio fischeri) protein is 3-ketoacyl-CoA thiolase.